The primary structure comprises 393 residues: Chorismate synthase (393 aa).

2 residues coordinate NADP(+): Arg-48 and Arg-54. Residues 125-127, 238-239, Gly-278, 293-297, and Arg-319 each bind FMN; these read RSS, NA, and KPTSS. Positions 355–393 are disordered; that stretch reads ACTTPKIPGHTGPREGQEEGPSDSEPKVEFADDPEPDEA.

This sequence belongs to the chorismate synthase family. Homotetramer. The cofactor is FMNH2.

The catalysed reaction is 5-O-(1-carboxyvinyl)-3-phosphoshikimate = chorismate + phosphate. It functions in the pathway metabolic intermediate biosynthesis; chorismate biosynthesis; chorismate from D-erythrose 4-phosphate and phosphoenolpyruvate: step 7/7. Catalyzes the anti-1,4-elimination of the C-3 phosphate and the C-6 proR hydrogen from 5-enolpyruvylshikimate-3-phosphate (EPSP) to yield chorismate, which is the branch point compound that serves as the starting substrate for the three terminal pathways of aromatic amino acid biosynthesis. This reaction introduces a second double bond into the aromatic ring system. The sequence is that of Chorismate synthase from Nitrosospira multiformis (strain ATCC 25196 / NCIMB 11849 / C 71).